The chain runs to 171 residues: uncharacterized protein (171 aa).

This is an uncharacterized protein from Orgyia pseudotsugata multicapsid polyhedrosis virus (OpMNPV).